We begin with the raw amino-acid sequence, 703 residues long: Arf-GAP with GTPase, ANK repeat and PH domain-containing protein 9 (703 aa).

Disordered regions lie at residues 249–287 (KRNG…TPTP), 299–323 (FTSE…TIGS), and 427–449 (SSTT…KHLK). Polar residues predominate over residues 271 to 286 (QEDPQFSVPPTANTPT). A compositionally biased stretch (basic and acidic residues) spans 303–318 (KGSDPDKERKAPENHA). A PH domain is found at 327-488 (IPIKQGMLLK…WVQAIQSQIL (162 aa)). One can recognise an Arf-GAP domain in the interval 509 to 629 (AMALQSIQNM…LFLAPLPCTE (121 aa)). The segment at 524–547 (CVDCETQNPKWASLNLGVLMCIEC) adopts a C4-type zinc-finger fold. Residues 631–700 (SLGQQLLRAT…WTSWPEMPTG (70 aa)) form an ANK repeat.

The protein belongs to the centaurin gamma-like family.

In terms of biological role, putative GTPase-activating protein. The protein is Arf-GAP with GTPase, ANK repeat and PH domain-containing protein 9 (AGAP9) of Homo sapiens (Human).